The following is a 254-amino-acid chain: Trans-aconitate 2-methyltransferase (254 aa).

It belongs to the methyltransferase superfamily. Tam family.

Its subcellular location is the cytoplasm. The catalysed reaction is trans-aconitate + S-adenosyl-L-methionine = (E)-3-(methoxycarbonyl)pent-2-enedioate + S-adenosyl-L-homocysteine. Functionally, catalyzes the S-adenosylmethionine monomethyl esterification of trans-aconitate. The chain is Trans-aconitate 2-methyltransferase from Mycobacterium sp. (strain JLS).